The sequence spans 282 residues: Glycine/sarcosine N-methyltransferase (282 aa).

The span at 1-23 (MTSTQNHPLQTQDDQQRFGQSPE) shows a compositional bias: polar residues. The tract at residues 1-27 (MTSTQNHPLQTQDDQQRFGQSPESVRE) is disordered. S-adenosyl-L-methionine-binding positions include tyrosine 35, tryptophan 43, arginine 52, alanine 76, aspartate 97, 123–124 (DW), and leucine 141. Residues asparagine 143, arginine 176, and tyrosine 217 each coordinate substrate.

This sequence belongs to the class I-like SAM-binding methyltransferase superfamily. Glycine N-methyltransferase family. In terms of assembly, monomer.

It catalyses the reaction glycine + 2 S-adenosyl-L-methionine = N,N-dimethylglycine + 2 S-adenosyl-L-homocysteine + 2 H(+). The catalysed reaction is glycine + S-adenosyl-L-methionine = sarcosine + S-adenosyl-L-homocysteine + H(+). It carries out the reaction sarcosine + S-adenosyl-L-methionine = N,N-dimethylglycine + S-adenosyl-L-homocysteine + H(+). Its pathway is amine and polyamine biosynthesis; betaine biosynthesis via glycine pathway; betaine from glycine: step 1/3. It participates in amine and polyamine biosynthesis; betaine biosynthesis via glycine pathway; betaine from glycine: step 2/3. Catalyzes the methylation of glycine and sarcosine to sarcosine and dimethylglycine, respectively, with S-adenosylmethionine (AdoMet) acting as the methyl donor. It has strict specificity for glycine and sarcosine as the methyl group acceptors. This chain is Glycine/sarcosine N-methyltransferase, found in Parasynechococcus marenigrum (strain WH8102).